The chain runs to 154 residues: 6,7-dimethyl-8-ribityllumazine synthase (154 aa).

5-amino-6-(D-ribitylamino)uracil contacts are provided by residues Phe22, 56–58, and 80–82; these read AFE and AVI. 85 to 86 contacts (2S)-2-hydroxy-3-oxobutyl phosphate; sequence ST. His88 serves as the catalytic Proton donor. A 5-amino-6-(D-ribitylamino)uracil-binding site is contributed by Phe113. Residue Arg127 participates in (2S)-2-hydroxy-3-oxobutyl phosphate binding.

The protein belongs to the DMRL synthase family.

The enzyme catalyses (2S)-2-hydroxy-3-oxobutyl phosphate + 5-amino-6-(D-ribitylamino)uracil = 6,7-dimethyl-8-(1-D-ribityl)lumazine + phosphate + 2 H2O + H(+). It functions in the pathway cofactor biosynthesis; riboflavin biosynthesis; riboflavin from 2-hydroxy-3-oxobutyl phosphate and 5-amino-6-(D-ribitylamino)uracil: step 1/2. Catalyzes the formation of 6,7-dimethyl-8-ribityllumazine by condensation of 5-amino-6-(D-ribitylamino)uracil with 3,4-dihydroxy-2-butanone 4-phosphate. This is the penultimate step in the biosynthesis of riboflavin. The polypeptide is 6,7-dimethyl-8-ribityllumazine synthase (Clostridium kluyveri (strain NBRC 12016)).